Here is a 166-residue protein sequence, read N- to C-terminus: NAD(P)H-quinone oxidoreductase subunit I, chloroplastic (166 aa).

4Fe-4S ferredoxin-type domains follow at residues 55-84 and 95-124; these read GRIHFEFDKCIACEVCVRVCPIDLPVVDWK and LNYSIDFGICIFCGNCVEYCPTNCLSMTEE. Residues cysteine 64, cysteine 67, cysteine 70, cysteine 74, cysteine 104, cysteine 107, cysteine 110, and cysteine 114 each contribute to the [4Fe-4S] cluster site.

The protein belongs to the complex I 23 kDa subunit family. NDH is composed of at least 16 different subunits, 5 of which are encoded in the nucleus. [4Fe-4S] cluster serves as cofactor.

It is found in the plastid. Its subcellular location is the chloroplast thylakoid membrane. The catalysed reaction is a plastoquinone + NADH + (n+1) H(+)(in) = a plastoquinol + NAD(+) + n H(+)(out). The enzyme catalyses a plastoquinone + NADPH + (n+1) H(+)(in) = a plastoquinol + NADP(+) + n H(+)(out). Its function is as follows. NDH shuttles electrons from NAD(P)H:plastoquinone, via FMN and iron-sulfur (Fe-S) centers, to quinones in the photosynthetic chain and possibly in a chloroplast respiratory chain. The immediate electron acceptor for the enzyme in this species is believed to be plastoquinone. Couples the redox reaction to proton translocation, and thus conserves the redox energy in a proton gradient. In Melampodium leucanthum (Black foot daisy), this protein is NAD(P)H-quinone oxidoreductase subunit I, chloroplastic.